We begin with the raw amino-acid sequence, 229 residues long: 2-C-methyl-D-erythritol 4-phosphate cytidylyltransferase (229 aa).

Belongs to the IspD/TarI cytidylyltransferase family. IspD subfamily.

The catalysed reaction is 2-C-methyl-D-erythritol 4-phosphate + CTP + H(+) = 4-CDP-2-C-methyl-D-erythritol + diphosphate. The protein operates within isoprenoid biosynthesis; isopentenyl diphosphate biosynthesis via DXP pathway; isopentenyl diphosphate from 1-deoxy-D-xylulose 5-phosphate: step 2/6. Its function is as follows. Catalyzes the formation of 4-diphosphocytidyl-2-C-methyl-D-erythritol from CTP and 2-C-methyl-D-erythritol 4-phosphate (MEP). The protein is 2-C-methyl-D-erythritol 4-phosphate cytidylyltransferase of Neisseria meningitidis serogroup C (strain 053442).